Reading from the N-terminus, the 179-residue chain is MSVSVGVLAIQGGFQKHAEMLESLGVEVKLVKFTNDFDEIDRLIIPGGESTALLNLLTKHQIFDKLQDFCSQNPVFGTCAGSIILSKGSQYLSLIDLEVERNGYGRQVDSFVTNLGFMGNSIKAVFIRAPKFTRVGDNIDVLAKFDDLPVLVRQGNILVSSFHPELTEDSSVHKYFLNM.

48-50 (GES) provides a ligand contact to L-glutamine. The active-site Nucleophile is C79. L-glutamine contacts are provided by residues R101 and 127–128 (IR). Residues H163 and E165 each act as charge relay system in the active site.

Belongs to the glutaminase PdxT/SNO family. In terms of assembly, in the presence of PdxS, forms a dodecamer of heterodimers. Only shows activity in the heterodimer.

It catalyses the reaction aldehydo-D-ribose 5-phosphate + D-glyceraldehyde 3-phosphate + L-glutamine = pyridoxal 5'-phosphate + L-glutamate + phosphate + 3 H2O + H(+). The enzyme catalyses L-glutamine + H2O = L-glutamate + NH4(+). It functions in the pathway cofactor biosynthesis; pyridoxal 5'-phosphate biosynthesis. Catalyzes the hydrolysis of glutamine to glutamate and ammonia as part of the biosynthesis of pyridoxal 5'-phosphate. The resulting ammonia molecule is channeled to the active site of PdxS. The sequence is that of Pyridoxal 5'-phosphate synthase subunit PdxT from Francisella philomiragia subsp. philomiragia (strain ATCC 25017 / CCUG 19701 / FSC 153 / O#319-036).